We begin with the raw amino-acid sequence, 428 residues long: L-gulono-1,4-lactone dehydrogenase (428 aa).

Residues 12–179 form the FAD-binding PCMH-type domain; sequence QVCAPSAIVR…SQVTLQTVPL (168 aa).

It belongs to the oxygen-dependent FAD-linked oxidoreductase family. Requires a divalent metal cation as cofactor.

The catalysed reaction is L-gulono-1,4-lactone + 2 Fe(III)-[cytochrome c] = L-ascorbate + 2 Fe(II)-[cytochrome c] + 3 H(+). The protein operates within cofactor biosynthesis; L-ascorbate biosynthesis. Functionally, oxidizes L-gulono-1,4-lactone to L-xylo-hexulonolactone which spontaneously isomerizes to L-ascorbate. This chain is L-gulono-1,4-lactone dehydrogenase, found in Mycobacterium tuberculosis (strain CDC 1551 / Oshkosh).